A 654-amino-acid polypeptide reads, in one-letter code: tRNA 5-methylaminomethyl-2-thiouridine biosynthesis bifunctional protein MnmC (654 aa).

Positions 1-236 are tRNA (mnm(5)s(2)U34)-methyltransferase; it reads MPTLLQHAQI…KWEVMSGAYV (236 aa). The segment at 262-654 is FAD-dependent cmnm(5)s(2)U34 oxidoreductase; it reads IGAGLAGSSS…FGLRRLIRGK (393 aa).

The protein in the N-terminal section; belongs to the methyltransferase superfamily. tRNA (mnm(5)s(2)U34)-methyltransferase family. It in the C-terminal section; belongs to the DAO family. FAD is required as a cofactor.

It is found in the cytoplasm. It catalyses the reaction 5-aminomethyl-2-thiouridine(34) in tRNA + S-adenosyl-L-methionine = 5-methylaminomethyl-2-thiouridine(34) in tRNA + S-adenosyl-L-homocysteine + H(+). Catalyzes the last two steps in the biosynthesis of 5-methylaminomethyl-2-thiouridine (mnm(5)s(2)U) at the wobble position (U34) in tRNA. Catalyzes the FAD-dependent demodification of cmnm(5)s(2)U34 to nm(5)s(2)U34, followed by the transfer of a methyl group from S-adenosyl-L-methionine to nm(5)s(2)U34, to form mnm(5)s(2)U34. This Pseudomonas putida (strain ATCC 700007 / DSM 6899 / JCM 31910 / BCRC 17059 / LMG 24140 / F1) protein is tRNA 5-methylaminomethyl-2-thiouridine biosynthesis bifunctional protein MnmC.